The sequence spans 827 residues: Cadherin-17 (827 aa).

Residues 1–21 (MVSAQLHFLCLLTLYLTGAYG) form the signal peptide. The Extracellular portion of the chain corresponds to 22–786 (QEGKFSGPLK…NQVGIPTVGM (765 aa)). Cadherin domains are found at residues 29–127 (PLKP…TFLQ), 128–243 (TKYE…APEP), 244–339 (VEIR…PPTC), 340–448 (LSQV…IPIF), 449–565 (ERSD…VPVF), 566–666 (PQQI…PPRL), and 667–776 (AKDY…RPAG). Residues Asn148, Asn183, Asn249, Asn418, Asn545, Asn573, and Asn721 are each glycosylated (N-linked (GlcNAc...) asparagine). Residues 787–807 (AVGILLTTFLVIGIILAVVFI) traverse the membrane as a helical segment. Topologically, residues 808–827 (RMRKDKVEDPQSPENKPLRS) are cytoplasmic.

As to expression, liver and intestine.

It localises to the cell membrane. Its function is as follows. Cadherins are calcium-dependent cell adhesion proteins. They preferentially interact with themselves in a homophilic manner in connecting cells; cadherins may thus contribute to the sorting of heterogeneous cell types. LI-cadherin may have a role in the morphological organization of liver and intestine. In Rattus norvegicus (Rat), this protein is Cadherin-17 (Cdh17).